We begin with the raw amino-acid sequence, 278 residues long: HTH-type transcriptional activator RhaS (278 aa).

Residues 174 to 272 (NHLIAWLEDH…GWSPREIRQG (99 aa)) enclose the HTH araC/xylS-type domain. 2 consecutive DNA-binding regions (H-T-H motif) follow at residues 191 to 212 (EAIA…KQHT) and 239 to 262 (VTHI…RREF).

As to quaternary structure, binds DNA as a dimer.

Its subcellular location is the cytoplasm. Functionally, activates expression of the rhaBAD and rhaT operons. This Escherichia fergusonii (strain ATCC 35469 / DSM 13698 / CCUG 18766 / IAM 14443 / JCM 21226 / LMG 7866 / NBRC 102419 / NCTC 12128 / CDC 0568-73) protein is HTH-type transcriptional activator RhaS.